The chain runs to 352 residues: Dihydroorotate dehydrogenase (quinone) (352 aa).

Residues 68–72 (AGFDK) and T92 contribute to the FMN site. K72 contacts substrate. 117-121 (NAMGF) is a binding site for substrate. N146 and N179 together coordinate FMN. N179 lines the substrate pocket. S182 serves as the catalytic Nucleophile. N184 provides a ligand contact to substrate. Residues K215 and T243 each contribute to the FMN site. Residue 244–245 (NT) participates in substrate binding. Residues G263, G292, and 313 to 314 (YS) each bind FMN.

Belongs to the dihydroorotate dehydrogenase family. Type 2 subfamily. As to quaternary structure, monomer. It depends on FMN as a cofactor.

It is found in the cell membrane. The enzyme catalyses (S)-dihydroorotate + a quinone = orotate + a quinol. It functions in the pathway pyrimidine metabolism; UMP biosynthesis via de novo pathway; orotate from (S)-dihydroorotate (quinone route): step 1/1. Its function is as follows. Catalyzes the conversion of dihydroorotate to orotate with quinone as electron acceptor. In Sulfurimonas denitrificans (strain ATCC 33889 / DSM 1251) (Thiomicrospira denitrificans (strain ATCC 33889 / DSM 1251)), this protein is Dihydroorotate dehydrogenase (quinone).